The chain runs to 123 residues: Chaperone protein SycN (123 aa).

Interacts with YscB to form a complex which specifically binds to YopN.

The protein localises to the cytoplasm. It localises to the cell inner membrane. Its function is as follows. Functions as a specific chaperone for YopN. It could facilitate the secretion and the subsequent translocation of YopN. This chain is Chaperone protein SycN (sycN), found in Yersinia enterocolitica.